The chain runs to 225 residues: Urease accessory protein UreF (225 aa).

It belongs to the UreF family. As to quaternary structure, ureD, UreF and UreG form a complex that acts as a GTP-hydrolysis-dependent molecular chaperone, activating the urease apoprotein by helping to assemble the nickel containing metallocenter of UreC. The UreE protein probably delivers the nickel.

It localises to the cytoplasm. In terms of biological role, required for maturation of urease via the functional incorporation of the urease nickel metallocenter. The protein is Urease accessory protein UreF of Thermosynechococcus vestitus (strain NIES-2133 / IAM M-273 / BP-1).